A 339-amino-acid chain; its full sequence is Alpha-N-dichloroacetyl-p-aminophenylserinol N-oxygenase (339 aa).

The segment covering 1 to 19 (MRDHTDEKSEAAGNDDGHV) has biased composition (basic and acidic residues). Residues 1–22 (MRDHTDEKSEAAGNDDGHVRIG) are disordered. Residues glutamate 109, glutamate 144, histidine 147, glutamate 205, histidine 232, glutamate 236, and histidine 239 each coordinate Fe cation.

It belongs to the AurF N-oxygenase family. The cofactor is Fe(2+).

It carries out the reaction alpha-N-dichloroacetyl-p-aminophenylserinol + AH2 + 2 O2 = chloramphenicol + A + 2 H2O. It functions in the pathway antibiotic biosynthesis. Its function is as follows. Involved in chloramphenicol biosynthesis. Catalyzes the six-electron oxidation of an aryl-amine precursor of chloramphenicol (NH2-CAM) to yield the aryl-nitro group of chloramphenicol (CAM). During catalysis, upon exposure of the diferrous cluster to O(2), ClmI forms an exceptionally long-lived peroxo intermediate (CmlI-peroxo), which reacts with NH2-CAM to form CAM. The sequence is that of Alpha-N-dichloroacetyl-p-aminophenylserinol N-oxygenase from Streptomyces venezuelae (strain ATCC 10712 / CBS 650.69 / DSM 40230 / JCM 4526 / NBRC 13096 / PD 04745).